A 301-amino-acid polypeptide reads, in one-letter code: Protoheme IX farnesyltransferase (301 aa).

9 helical membrane-spanning segments follow: residues 20 to 42 (FTEL…GMWL), 55 to 75 (VDVI…SGAF), 105 to 125 (ALMV…MTTW), 126 to 146 (QAGV…SLYA), 150 to 172 (LVSN…WFAV), 176 to 198 (FSIV…FYAI), 227 to 247 (MFFW…LGIV), 249 to 269 (VVLA…GFKM), and 280 to 300 (FVYS…ISIF).

The protein belongs to the UbiA prenyltransferase family. Protoheme IX farnesyltransferase subfamily. Interacts with CtaA.

It is found in the cell membrane. The enzyme catalyses heme b + (2E,6E)-farnesyl diphosphate + H2O = Fe(II)-heme o + diphosphate. Its pathway is porphyrin-containing compound metabolism; heme O biosynthesis; heme O from protoheme: step 1/1. Functionally, converts heme B (protoheme IX) to heme O by substitution of the vinyl group on carbon 2 of heme B porphyrin ring with a hydroxyethyl farnesyl side group. This Listeria monocytogenes serotype 4b (strain CLIP80459) protein is Protoheme IX farnesyltransferase.